The primary structure comprises 797 residues: Calcium-transporting ATPase CtpE (797 aa).

A run of 3 helical transmembrane segments spans residues 55 to 75, 215 to 235, and 254 to 274; these read LLLIVLATGSLINGMFGLLII, ILQFITYLLVPAGLLTIYTQL, and VPMVPEGLVLMTSIAFAVGVV. D301 (4-aspartylphosphate intermediate) is an active-site residue. 3 residues coordinate Mg(2+): D301, T303, and D536. The next 6 helical transmembrane spans lie at 601-621, 633-653, 667-687, 703-723, 729-749, and 764-784; these read TVYSVLLALLVGIECLIAIPL, IHVTIAAWFTIGIPAFILSLA, VMTSAVPFGLVIGVATFVTYL, ASTAALITLLMTALWVLAVIA, WRLALVLASGLAYVVIFSLPL, and TSIALAVGVVGAATIEAMWWI.

Belongs to the cation transport ATPase (P-type) (TC 3.A.3) family.

The protein resides in the cell membrane. It carries out the reaction Ca(2+)(in) + ATP + H2O = Ca(2+)(out) + ADP + phosphate + H(+). Its function is as follows. P-type ATPase involved in specific uptake of calcium. This is Calcium-transporting ATPase CtpE (ctpE) from Mycobacterium bovis (strain ATCC BAA-935 / AF2122/97).